The primary structure comprises 292 residues: Malonyl-S-ACP:biotin-protein carboxyltransferase MADD (292 aa).

The region spanning 1–281 (MEIMMGQGRL…RGKVMAMMDK (281 aa)) is the CoA carboxyltransferase C-terminal domain.

The protein localises to the cytoplasm. It catalyses the reaction N(6)-biotinyl-L-lysyl-[protein] + malonyl-[ACP] = N(6)-carboxybiotinyl-L-lysyl-[protein] + acetyl-[ACP]. Its function is as follows. Gamma subunit of the biotin-dependent malonate decarboxylase multienzyme complex (EC 7.2.4.4). The two subunits MADC and MADD are required for the transfer of the malonate carboxy group from the acyl-carrier protein (ACP) to the prosthetic group of the biotin carrier MADF. Required for the regeneration of ACP. This chain is Malonyl-S-ACP:biotin-protein carboxyltransferase MADD (madD), found in Malonomonas rubra.